We begin with the raw amino-acid sequence, 201 residues long: Holliday junction branch migration complex subunit RuvA (201 aa).

The interval 1-63 (MIEYVRGELA…EDAYVLYGFA (63 aa)) is domain I. Residues 64–142 (DKQEREIFLL…TMGATVAGGS (79 aa)) form a domain II region. The segment at 143–151 (ASAGMLLQS) is flexible linker. Residues 152-201 (ASVEVQEEAVAALTMLGFAAAPSQKVVLAILKEEPDAPVEKVIKLALKRL) form a domain III region.

Belongs to the RuvA family. In terms of assembly, homotetramer. Forms an RuvA(8)-RuvB(12)-Holliday junction (HJ) complex. HJ DNA is sandwiched between 2 RuvA tetramers; dsDNA enters through RuvA and exits via RuvB. An RuvB hexamer assembles on each DNA strand where it exits the tetramer. Each RuvB hexamer is contacted by two RuvA subunits (via domain III) on 2 adjacent RuvB subunits; this complex drives branch migration. In the full resolvosome a probable DNA-RuvA(4)-RuvB(12)-RuvC(2) complex forms which resolves the HJ.

The protein resides in the cytoplasm. Its function is as follows. The RuvA-RuvB-RuvC complex processes Holliday junction (HJ) DNA during genetic recombination and DNA repair, while the RuvA-RuvB complex plays an important role in the rescue of blocked DNA replication forks via replication fork reversal (RFR). RuvA specifically binds to HJ cruciform DNA, conferring on it an open structure. The RuvB hexamer acts as an ATP-dependent pump, pulling dsDNA into and through the RuvAB complex. HJ branch migration allows RuvC to scan DNA until it finds its consensus sequence, where it cleaves and resolves the cruciform DNA. The sequence is that of Holliday junction branch migration complex subunit RuvA from Bacteroides thetaiotaomicron (strain ATCC 29148 / DSM 2079 / JCM 5827 / CCUG 10774 / NCTC 10582 / VPI-5482 / E50).